The following is a 79-amino-acid chain: Acyl carrier protein (79 aa).

Positions 1-77 (MNNVEKKIKK…KSIDYINNKN (77 aa)) constitute a Carrier domain. Ser-37 carries the O-(pantetheine 4'-phosphoryl)serine modification.

Belongs to the acyl carrier protein (ACP) family. In terms of processing, 4'-phosphopantetheine is transferred from CoA to a specific serine of apo-ACP by AcpS. This modification is essential for activity because fatty acids are bound in thioester linkage to the sulfhydryl of the prosthetic group.

The protein resides in the cytoplasm. The protein operates within lipid metabolism; fatty acid biosynthesis. Functionally, carrier of the growing fatty acid chain in fatty acid biosynthesis. The protein is Acyl carrier protein of Buchnera aphidicola subsp. Schizaphis graminum (strain Sg).